Consider the following 477-residue polypeptide: Kinesin-like protein KIN-1 (477 aa).

One can recognise a Kinesin motor domain in the interval 3 to 330; that stretch reads NVTVCVRFRP…VRFGTRTKLI (328 aa). 86-93 lines the ATP pocket; sequence GQTGAGKT. Residues 402-451 are a coiled coil; that stretch reads QDAASQEVSLLTQAVEELKETVEELTDENERLRGELELAQEAAAAAAAAR.

It belongs to the TRAFAC class myosin-kinesin ATPase superfamily. Kinesin family. KIN-1 subfamily. As to expression, widely expressed. Expressed in young roots and leaves, in mature roots, culm, sheath and leaves, and in panicles at various developmental stages. Strongest expression is detected in panicles. In the panicle, expression is detected in anthers, glumme, lemma and palea. In the spikelet, expression is detected in both microsporocyte and the anther walls.

The protein localises to the cytoplasm. Functionally, kinesin-like motor protein that exhibits microtubule-stimulated ATPase activity. Plays an essential role in male meiotic chromosomal dynamics, male gametogenesis and anther dehiscence. May play a minor and nonessential role in regulating meiotic spindle formation. This Oryza sativa subsp. japonica (Rice) protein is Kinesin-like protein KIN-1.